The chain runs to 357 residues: UDP-N-acetylglucosamine--N-acetylmuramyl-(pentapeptide) pyrophosphoryl-undecaprenol N-acetylglucosamine transferase (357 aa).

Residues 15-17 (TGG), Asn-124, Arg-165, Ser-191, and Gln-285 each bind UDP-N-acetyl-alpha-D-glucosamine.

The protein belongs to the glycosyltransferase 28 family. MurG subfamily.

The protein localises to the cell inner membrane. It catalyses the reaction di-trans,octa-cis-undecaprenyl diphospho-N-acetyl-alpha-D-muramoyl-L-alanyl-D-glutamyl-meso-2,6-diaminopimeloyl-D-alanyl-D-alanine + UDP-N-acetyl-alpha-D-glucosamine = di-trans,octa-cis-undecaprenyl diphospho-[N-acetyl-alpha-D-glucosaminyl-(1-&gt;4)]-N-acetyl-alpha-D-muramoyl-L-alanyl-D-glutamyl-meso-2,6-diaminopimeloyl-D-alanyl-D-alanine + UDP + H(+). It participates in cell wall biogenesis; peptidoglycan biosynthesis. Its function is as follows. Cell wall formation. Catalyzes the transfer of a GlcNAc subunit on undecaprenyl-pyrophosphoryl-MurNAc-pentapeptide (lipid intermediate I) to form undecaprenyl-pyrophosphoryl-MurNAc-(pentapeptide)GlcNAc (lipid intermediate II). The sequence is that of UDP-N-acetylglucosamine--N-acetylmuramyl-(pentapeptide) pyrophosphoryl-undecaprenol N-acetylglucosamine transferase from Microcystis aeruginosa (strain NIES-843 / IAM M-2473).